Here is a 231-residue protein sequence, read N- to C-terminus: Ribonuclease 3 (231 aa).

The region spanning 3–130 (MHEFFENFGI…VTAAIYLDQT (128 aa)) is the RNase III domain. Glu-43 is a binding site for Mg(2+). The active site involves Asp-47. Positions 116 and 119 each coordinate Mg(2+). Glu-119 is a catalytic residue. The 72-residue stretch at 157-228 (DYKSELQEII…AKDCLNKLKK (72 aa)) folds into the DRBM domain.

It belongs to the ribonuclease III family. In terms of assembly, homodimer. Mg(2+) serves as cofactor.

It is found in the cytoplasm. It catalyses the reaction Endonucleolytic cleavage to 5'-phosphomonoester.. In terms of biological role, digests double-stranded RNA. Involved in the processing of primary rRNA transcript to yield the immediate precursors to the large and small rRNAs (23S and 16S). Processes some mRNAs, and tRNAs when they are encoded in the rRNA operon. Processes pre-crRNA and tracrRNA of type II CRISPR loci if present in the organism. The polypeptide is Ribonuclease 3 (Mesoplasma florum (strain ATCC 33453 / NBRC 100688 / NCTC 11704 / L1) (Acholeplasma florum)).